Consider the following 400-residue polypeptide: uncharacterized protein (400 aa).

An N-terminal signal peptide occupies residues 1–23; that stretch reads MSRKLLLALTFLVVLGIAVVVMA.

This is an uncharacterized protein from Archaeoglobus fulgidus (strain ATCC 49558 / DSM 4304 / JCM 9628 / NBRC 100126 / VC-16).